The sequence spans 157 residues: Large ribosomal subunit protein uL15 (157 aa).

The segment at 1–41 (MKLHELSDNPGATKKRKRVGRGPGSGTGKMGGRGIKGQKSR) is disordered. The span at 21 to 35 (RGPGSGTGKMGGRGI) shows a compositional bias: gly residues.

This sequence belongs to the universal ribosomal protein uL15 family. As to quaternary structure, part of the 50S ribosomal subunit.

Functionally, binds to the 23S rRNA. The protein is Large ribosomal subunit protein uL15 of Jannaschia sp. (strain CCS1).